Here is a 226-residue protein sequence, read N- to C-terminus: Thiamine-phosphate synthase (226 aa).

Residues 46-50 (QFRDK) and Asp-83 each bind 4-amino-2-methyl-5-(diphosphooxymethyl)pyrimidine. Residues Asp-84 and Asp-103 each coordinate Mg(2+). Residue Ser-122 participates in 4-amino-2-methyl-5-(diphosphooxymethyl)pyrimidine binding. A 2-[(2R,5Z)-2-carboxy-4-methylthiazol-5(2H)-ylidene]ethyl phosphate-binding site is contributed by 149-151 (TQS). Residue Lys-152 participates in 4-amino-2-methyl-5-(diphosphooxymethyl)pyrimidine binding. Residues Gly-181 and 201–202 (IT) each bind 2-[(2R,5Z)-2-carboxy-4-methylthiazol-5(2H)-ylidene]ethyl phosphate.

This sequence belongs to the thiamine-phosphate synthase family. The cofactor is Mg(2+).

It catalyses the reaction 2-[(2R,5Z)-2-carboxy-4-methylthiazol-5(2H)-ylidene]ethyl phosphate + 4-amino-2-methyl-5-(diphosphooxymethyl)pyrimidine + 2 H(+) = thiamine phosphate + CO2 + diphosphate. The enzyme catalyses 2-(2-carboxy-4-methylthiazol-5-yl)ethyl phosphate + 4-amino-2-methyl-5-(diphosphooxymethyl)pyrimidine + 2 H(+) = thiamine phosphate + CO2 + diphosphate. It carries out the reaction 4-methyl-5-(2-phosphooxyethyl)-thiazole + 4-amino-2-methyl-5-(diphosphooxymethyl)pyrimidine + H(+) = thiamine phosphate + diphosphate. The protein operates within cofactor biosynthesis; thiamine diphosphate biosynthesis; thiamine phosphate from 4-amino-2-methyl-5-diphosphomethylpyrimidine and 4-methyl-5-(2-phosphoethyl)-thiazole: step 1/1. Functionally, condenses 4-methyl-5-(beta-hydroxyethyl)thiazole monophosphate (THZ-P) and 2-methyl-4-amino-5-hydroxymethyl pyrimidine pyrophosphate (HMP-PP) to form thiamine monophosphate (TMP). This is Thiamine-phosphate synthase from Haemophilus influenzae (strain ATCC 51907 / DSM 11121 / KW20 / Rd).